The following is a 50-amino-acid chain: Ampulexin 1 (50 aa).

Positions 1-26 (MKAIMVLFYVMMLTIIASVSMVNGSP) are cleaved as a signal peptide.

In terms of assembly, monomer. As to expression, expressed in venom sac and, to a lesser extent, in venom gland. Not expressed in brain.

It is found in the secreted. Functionally, amphipathic peptide which probably adopts an alpha-helical structure. When injected in subesophageal ganglia of cockroach P.americana, a natural host for larvae of A.compressa, dampens the escape response for about 1 hour which may contribute to early stages of hypokinesia. Has no antimicrobial activity against E.coli DH5alpha or B.thuringiensis. Is not cytotoxic in vitro. The sequence is that of Ampulexin 1 from Ampulex compressa (Emerald cockroach wasp).